A 268-amino-acid chain; its full sequence is E3 ubiquitin-protein ligase IAP-3 (268 aa).

BIR repeat units lie at residues 18-84 and 111-178; these read KAAR…CPFV and EAAR…CEYV. Positions 148, 151, 168, and 175 each coordinate Zn(2+). The RING-type zinc finger occupies 221-256; sequence CKICLGAEKTVCFVPCGHVVACGKCAAGVTTCPVCR.

This sequence belongs to the IAP family. Auto-ubiquitinated.

It carries out the reaction S-ubiquitinyl-[E2 ubiquitin-conjugating enzyme]-L-cysteine + [acceptor protein]-L-lysine = [E2 ubiquitin-conjugating enzyme]-L-cysteine + N(6)-ubiquitinyl-[acceptor protein]-L-lysine.. Its function is as follows. RING-finger E3 ubiquitin ligase required to prevent cellular apoptosis in infected cells. Ubiquitinates and subsequently targets host pro-apoptotic cellular proteins such as HID for degradation by the proteasome. This Orgyia pseudotsugata multicapsid polyhedrosis virus (OpMNPV) protein is E3 ubiquitin-protein ligase IAP-3 (IAP3).